Reading from the N-terminus, the 275-residue chain is Formamidopyrimidine-DNA glycosylase (275 aa).

The active-site Schiff-base intermediate with DNA is the Pro2. Glu3 acts as the Proton donor in catalysis. Lys58 acts as the Proton donor; for beta-elimination activity in catalysis. Residues His93, Arg111, and Arg156 each contribute to the DNA site. Residues 241 to 275 (FVYDRAGLPCRVCGTPIRQIVQGQRSTYFCPTCQR) form an FPG-type zinc finger. Arg265 acts as the Proton donor; for delta-elimination activity in catalysis.

Belongs to the FPG family. In terms of assembly, monomer. Requires Zn(2+) as cofactor.

The enzyme catalyses Hydrolysis of DNA containing ring-opened 7-methylguanine residues, releasing 2,6-diamino-4-hydroxy-5-(N-methyl)formamidopyrimidine.. It carries out the reaction 2'-deoxyribonucleotide-(2'-deoxyribose 5'-phosphate)-2'-deoxyribonucleotide-DNA = a 3'-end 2'-deoxyribonucleotide-(2,3-dehydro-2,3-deoxyribose 5'-phosphate)-DNA + a 5'-end 5'-phospho-2'-deoxyribonucleoside-DNA + H(+). Its function is as follows. Involved in base excision repair of DNA damaged by oxidation or by mutagenic agents. Acts as a DNA glycosylase that recognizes and removes damaged bases. Has a preference for oxidized purines, such as 7,8-dihydro-8-oxoguanine (8-oxoG). Has AP (apurinic/apyrimidinic) lyase activity and introduces nicks in the DNA strand. Cleaves the DNA backbone by beta-delta elimination to generate a single-strand break at the site of the removed base with both 3'- and 5'-phosphates. The sequence is that of Formamidopyrimidine-DNA glycosylase from Burkholderia ambifaria (strain MC40-6).